The chain runs to 258 residues: Small ribosomal subunit protein uS2 (258 aa).

Residues 226 to 258 form a disordered region; the sequence is QGVSNEEVAAEQNIDLDEKEKSEETEATEATEE.

This sequence belongs to the universal ribosomal protein uS2 family.

The chain is Small ribosomal subunit protein uS2 from Staphylococcus aureus (strain COL).